The chain runs to 385 residues: Isomaltose glucohydrolase (385 aa).

W125 is a substrate binding site. The Proton acceptor role is filled by D175. The Proton donor role is filled by E178. The Proton acceptor role is filled by E335.

The protein belongs to the glycosyl hydrolase 15 family.

The protein resides in the cytoplasm. The catalysed reaction is isomaltose + H2O = beta-D-glucose + D-glucose. In terms of biological role, involved in the intracellular degradation of the cyclic tetrasaccharide cyclobis-(1-6)-alpha-nigerosyl (CNN) formed extracellularly from starch. Catalyzes the hydrolysis of alpha-1,6-glucosidic linkage from the non-reducing end of isomaltose to yield beta-D-glucose and D-glucose. Can also act on panose and isomaltotriose at a lower rate. It displays low or no activity toward CNN and the general GH15 enzyme substrates such as maltose, soluble starch or dextran. This Kribbella flavida (strain DSM 17836 / JCM 10339 / NBRC 14399) protein is Isomaltose glucohydrolase.